Reading from the N-terminus, the 99-residue chain is DNA-directed RNA polymerase subunit omega (99 aa).

This sequence belongs to the RNA polymerase subunit omega family. As to quaternary structure, the RNAP catalytic core consists of 2 alpha, 1 beta, 1 beta' and 1 omega subunit. When a sigma factor is associated with the core the holoenzyme is formed, which can initiate transcription.

The enzyme catalyses RNA(n) + a ribonucleoside 5'-triphosphate = RNA(n+1) + diphosphate. Functionally, promotes RNA polymerase assembly. Latches the N- and C-terminal regions of the beta' subunit thereby facilitating its interaction with the beta and alpha subunits. The protein is DNA-directed RNA polymerase subunit omega (rpoZ) of Deinococcus radiodurans (strain ATCC 13939 / DSM 20539 / JCM 16871 / CCUG 27074 / LMG 4051 / NBRC 15346 / NCIMB 9279 / VKM B-1422 / R1).